Reading from the N-terminus, the 1034-residue chain is Potassium-transporting ATPase alpha chain 1 (1034 aa).

Topologically, residues 2-97 are cytoplasmic; that stretch reads GKAENYELYQ…NALRPPRGTP (96 aa). 2 positions are modified to phosphotyrosine: tyrosine 7 and tyrosine 10. Positions 13-40 are disordered; the sequence is ELGPGPSGDMAAKMSKKKAGRGGGKRKE. Residues 26-39 are compositionally biased toward basic residues; sequence MSKKKAGRGGGKRK. Serine 27 bears the Phosphoserine; by PKA and PKC mark. The helical transmembrane segment at 98–118 threads the bilayer; the sequence is EYVKFARQLAGGLQCLMWVAA. The Lumenal portion of the chain corresponds to 119–141; that stretch reads AICLIAFAIQASEGDLTTDDNLY. Residues 142–162 traverse the membrane as a helical segment; the sequence is LALALIAVVVVTGCFGYYQEF. The Cytoplasmic segment spans residues 163–298; that stretch reads KSTNIIASFK…NEKTPIAIEI (136 aa). The interval 222 to 244 is disordered; sequence KVDNSSLTGESEPQTRSPECTHE. A compositionally biased stretch (polar residues) spans 225–239; that stretch reads NSSLTGESEPQTRSP. The chain crosses the membrane as a helical span at residues 299-318; sequence EHFVDIIAGLAILFGATFFI. At 319–330 the chain is on the lumenal side; the sequence is VAMCIGYTFLRA. The chain crosses the membrane as a helical span at residues 331 to 348; sequence MVFFMAIVVAYVPEGLLA. K(+) is bound by residues valine 339, alanine 340, valine 342, and glutamate 344. Over 349-782 the chain is Cytoplasmic; that stretch reads TVTVCLSLTA…EQGRLIFDNL (434 aa). Aspartate 386 functions as the 4-aspartylphosphate intermediate in the catalytic mechanism. Residues aspartate 386 and threonine 388 each contribute to the Mg(2+) site. Serine 462 and serine 600 each carry phosphoserine. Positions 727 and 731 each coordinate Mg(2+). The helical transmembrane segment at 783 to 802 threads the bilayer; that stretch reads KKSIAYTLTKNIPELTPYLI. Glutamate 796 provides a ligand contact to K(+). At 803 to 812 the chain is on the lumenal side; sequence YITVSVPLPL. Residues 813–833 traverse the membrane as a helical segment; sequence GCITILFIELCTDIFPSVSLA. Glutamate 821 lines the K(+) pocket. The Cytoplasmic segment spans residues 834–853; it reads YEKAESDIMHLRPRNPKRDR. The residue at position 839 (serine 839) is a Phosphoserine. Residues 854-876 traverse the membrane as a helical segment; the sequence is LVNEPLAAYSYFQIGAIQSFAGF. At 877–928 the chain is on the lumenal side; the sequence is TDYFTAMAQEGWFPLLCVGLRPQWENHHLQDLQDSYGQEWTFGQRLYQQYTC. Residues 929–948 form a helical membrane-spanning segment; sequence YTVFFISIEMCQIADVLIRK. The Cytoplasmic segment spans residues 949-962; sequence TRRLSAFQQGFFRN. Serine 953 carries the post-translational modification Phosphoserine; by PKA. Residues 963 to 981 traverse the membrane as a helical segment; the sequence is RILVIAIVFQVCIGCFLCY. Topologically, residues 982–996 are lumenal; the sequence is CPGMPNIFNFMPIRF. The chain crosses the membrane as a helical span at residues 997-1017; it reads QWWLVPMPFGLLIFVYDEIRK. Residues 1018–1034 lie on the Cytoplasmic side of the membrane; the sequence is LGVRCCPGSWWDQELYY.

This sequence belongs to the cation transport ATPase (P-type) (TC 3.A.3) family. Type IIC subfamily. The gastric H(+)/K(+) ATPase pump is composed of the catalytic alpha subunit ATP4A and the regulatory beta subunit ATP4B. Interacts (via the P-domain) with ATP4B (via N-terminus); this interaction stabilizes the lumenal-open E2 conformation state and prevents the reverse reaction of the transport cycle.

The protein localises to the apical cell membrane. The protein resides in the cell membrane. It carries out the reaction K(+)(out) + ATP + H2O + H(+)(in) = K(+)(in) + ADP + phosphate + 2 H(+)(out). Down-regulated by K(+)-competitive acid blockers (P-CABs) such as vonoprazan. The catalytic subunit of the gastric H(+)/K(+) ATPase pump which transports H(+) ions in exchange for K(+) ions across the apical membrane of parietal cells. Uses ATP as an energy source to pump H(+) ions to the gastric lumen while transporting K(+) ion from the lumen into the cell. Remarkably generates a million-fold proton gradient across the gastric parietal cell membrane, acidifying the gastric juice down to pH 1. Within a transport cycle, the transfer of a H(+) ion across the membrane is coupled to ATP hydrolysis and is associated with a transient phosphorylation that shifts the pump conformation from inward-facing (E1) to outward-facing state (E2). The release of the H(+) ion in the stomach lumen is followed by binding of K(+) ion converting the pump conformation back to the E1 state. This is Potassium-transporting ATPase alpha chain 1 (ATP4A) from Sus scrofa (Pig).